Reading from the N-terminus, the 160-residue chain is SsrA-binding protein (160 aa).

The disordered stretch occupies residues 132-160 (KEFDKRDTVRERDSNRELQRTMRNKGKEE).

This sequence belongs to the SmpB family.

The protein localises to the cytoplasm. Required for rescue of stalled ribosomes mediated by trans-translation. Binds to transfer-messenger RNA (tmRNA), required for stable association of tmRNA with ribosomes. tmRNA and SmpB together mimic tRNA shape, replacing the anticodon stem-loop with SmpB. tmRNA is encoded by the ssrA gene; the 2 termini fold to resemble tRNA(Ala) and it encodes a 'tag peptide', a short internal open reading frame. During trans-translation Ala-aminoacylated tmRNA acts like a tRNA, entering the A-site of stalled ribosomes, displacing the stalled mRNA. The ribosome then switches to translate the ORF on the tmRNA; the nascent peptide is terminated with the 'tag peptide' encoded by the tmRNA and targeted for degradation. The ribosome is freed to recommence translation, which seems to be the essential function of trans-translation. The polypeptide is SsrA-binding protein (Pseudomonas entomophila (strain L48)).